A 236-amino-acid polypeptide reads, in one-letter code: NAD(P)H-hydrate epimerase (236 aa).

A YjeF N-terminal domain is found at 11–217 (AAALDRELMS…SIAKKYDFDV (207 aa)). 61–65 (NNGGD) is a (6S)-NADPHX binding site. Positions 62 and 123 each coordinate K(+). Residues 127-133 (GFSFSGE) and aspartate 156 each bind (6S)-NADPHX. Serine 159 serves as a coordination point for K(+).

Belongs to the NnrE/AIBP family. The cofactor is K(+).

The protein resides in the cytoplasm. It is found in the mitochondrion. The catalysed reaction is (6R)-NADHX = (6S)-NADHX. The enzyme catalyses (6R)-NADPHX = (6S)-NADPHX. Functionally, catalyzes the epimerization of the S- and R-forms of NAD(P)HX, a damaged form of NAD(P)H that is a result of enzymatic or heat-dependent hydration. This is a prerequisite for the S-specific NAD(P)H-hydrate dehydratase to allow the repair of both epimers of NAD(P)HX. This is NAD(P)H-hydrate epimerase from Neurospora crassa (strain ATCC 24698 / 74-OR23-1A / CBS 708.71 / DSM 1257 / FGSC 987).